The primary structure comprises 450 residues: Tubulin alpha chain (450 aa).

GTP is bound at residue Q11. Residue K40 is modified to N6-acetyllysine. 7 residues coordinate GTP: E71, S140, G144, T145, T179, N206, and N228. Mg(2+) is bound at residue E71. Residue E254 is part of the active site.

Belongs to the tubulin family. As to quaternary structure, dimer of alpha and beta chains. A typical microtubule is a hollow water-filled tube with an outer diameter of 25 nm and an inner diameter of 15 nM. Alpha-beta heterodimers associate head-to-tail to form protofilaments running lengthwise along the microtubule wall with the beta-tubulin subunit facing the microtubule plus end conferring a structural polarity. Microtubules usually have 13 protofilaments but different protofilament numbers can be found in some organisms and specialized cells. It depends on Mg(2+) as a cofactor. Acetylation of alpha chains at Lys-40 stabilizes microtubules and affects affinity and processivity of microtubule motors. This modification has a role in multiple cellular functions, ranging from cell motility, cell cycle progression or cell differentiation to intracellular trafficking and signaling.

The protein localises to the cytoplasm. Its subcellular location is the cytoskeleton. The enzyme catalyses GTP + H2O = GDP + phosphate + H(+). Functionally, tubulin is the major constituent of microtubules, a cylinder consisting of laterally associated linear protofilaments composed of alpha- and beta-tubulin heterodimers. Microtubules grow by the addition of GTP-tubulin dimers to the microtubule end, where a stabilizing cap forms. Below the cap, tubulin dimers are in GDP-bound state, owing to GTPase activity of alpha-tubulin. This Euplotoides octocarinatus (Freshwater ciliate) protein is Tubulin alpha chain.